A 310-amino-acid polypeptide reads, in one-letter code: Aspartate carbamoyltransferase catalytic subunit (310 aa).

Carbamoyl phosphate contacts are provided by Arg58 and Thr59. Lys86 is an L-aspartate binding site. Residues Arg108, His136, and Gln139 each contribute to the carbamoyl phosphate site. L-aspartate contacts are provided by Arg169 and Arg222. Residues Gly264 and Pro265 each contribute to the carbamoyl phosphate site.

The protein belongs to the aspartate/ornithine carbamoyltransferase superfamily. ATCase family. In terms of assembly, heterododecamer (2C3:3R2) of six catalytic PyrB chains organized as two trimers (C3), and six regulatory PyrI chains organized as three dimers (R2).

The enzyme catalyses carbamoyl phosphate + L-aspartate = N-carbamoyl-L-aspartate + phosphate + H(+). It functions in the pathway pyrimidine metabolism; UMP biosynthesis via de novo pathway; (S)-dihydroorotate from bicarbonate: step 2/3. Its function is as follows. Catalyzes the condensation of carbamoyl phosphate and aspartate to form carbamoyl aspartate and inorganic phosphate, the committed step in the de novo pyrimidine nucleotide biosynthesis pathway. The chain is Aspartate carbamoyltransferase catalytic subunit from Campylobacter fetus subsp. fetus (strain 82-40).